The chain runs to 259 residues: Dihydroorotate dehydrogenase B (NAD(+)), electron transfer subunit (259 aa).

The 101-residue stretch at 3-103 folds into the FAD-binding FR-type domain; it reads KKQGRLTIVK…LGPLGQGFPL (101 aa). Residues 54–57, 71–73, and 78–79 contribute to the FAD site; these read RPIS, IYR, and GT. [2Fe-2S] cluster contacts are provided by C222, C227, C230, and C246.

This sequence belongs to the PyrK family. Heterotetramer of 2 PyrK and 2 PyrD type B subunits. [2Fe-2S] cluster is required as a cofactor. FAD serves as cofactor.

It participates in pyrimidine metabolism; UMP biosynthesis via de novo pathway; orotate from (S)-dihydroorotate (NAD(+) route): step 1/1. In terms of biological role, responsible for channeling the electrons from the oxidation of dihydroorotate from the FMN redox center in the PyrD type B subunit to the ultimate electron acceptor NAD(+). This chain is Dihydroorotate dehydrogenase B (NAD(+)), electron transfer subunit, found in Shouchella clausii (strain KSM-K16) (Alkalihalobacillus clausii).